The primary structure comprises 328 residues: Type II secretion system protein K (328 aa).

The propeptide at 1 to 7 (MRSRQRG) is leader sequence. A helical membrane pass occupies residues 8–28 (AALLVVLLILALMVTIAAVIT). Residues 29 to 328 (ERTGKAFLRT…QYGGYRTVNP (300 aa)) lie on the Periplasmic side of the membrane.

It belongs to the GSP K family. As to quaternary structure, type II secretion is composed of four main components: the outer membrane complex, the inner membrane complex, the cytoplasmic secretion ATPase and the periplasm-spanning pseudopilus. Interacts with core component OutG. Post-translationally, cleaved by prepilin peptidase.

It is found in the cell inner membrane. Its function is as follows. Component of the type II secretion system required for the energy-dependent secretion of extracellular factors such as proteases and toxins from the periplasm. Plays a role in pseudopilus assembly and seems to control its length. Interacts with the pseudopilus tip complex that is critical for the recognition and binding of secretion substrates. The sequence is that of Type II secretion system protein K (outK) from Pectobacterium carotovorum subsp. carotovorum (Erwinia carotovora subsp. carotovora).